The chain runs to 407 residues: Phosphopentomutase (407 aa).

Mn(2+) is bound by residues aspartate 10, aspartate 306, histidine 311, aspartate 347, histidine 348, and histidine 359.

It belongs to the phosphopentomutase family. It depends on Mn(2+) as a cofactor.

The protein localises to the cytoplasm. It catalyses the reaction 2-deoxy-alpha-D-ribose 1-phosphate = 2-deoxy-D-ribose 5-phosphate. It carries out the reaction alpha-D-ribose 1-phosphate = D-ribose 5-phosphate. Its pathway is carbohydrate degradation; 2-deoxy-D-ribose 1-phosphate degradation; D-glyceraldehyde 3-phosphate and acetaldehyde from 2-deoxy-alpha-D-ribose 1-phosphate: step 1/2. In terms of biological role, isomerase that catalyzes the conversion of deoxy-ribose 1-phosphate (dRib-1-P) and ribose 1-phosphate (Rib-1-P) to deoxy-ribose 5-phosphate (dRib-5-P) and ribose 5-phosphate (Rib-5-P), respectively. The sequence is that of Phosphopentomutase from Edwardsiella ictaluri (strain 93-146).